Here is a 204-residue protein sequence, read N- to C-terminus: Recombination protein RecR (204 aa).

The C4-type zinc-finger motif lies at 58–75 (CSICQNVTDRGDDPCSIC). Positions 83-181 (SKICVVESPP…EVTKIARGIP (99 aa)) constitute a Toprim domain.

The protein belongs to the RecR family.

May play a role in DNA repair. It seems to be involved in an RecBC-independent recombinational process of DNA repair. It may act with RecF and RecO. The sequence is that of Recombination protein RecR from Chlorobium phaeobacteroides (strain BS1).